We begin with the raw amino-acid sequence, 732 residues long: X-ray repair cross-complementing protein 5 (732 aa).

The VWFA domain occupies 9–231; that stretch reads AVVLCMDVGF…DEIYSFSESL (223 aa). Residues 138–165 are leucine-zipper; it reads LSSRFSKSQLDIIIHSLKKCDISLQFFL. N6-acetyllysine is present on Lys-144. Residue Lys-195 forms a Glycyl lysine isopeptide (Lys-Gly) (interchain with G-Cter in SUMO2) linkage. The Ku domain maps to 253–452; the sequence is IGSNLSIRIA…KYAPTEAQLN (200 aa). Phosphoserine occurs at positions 255 and 258. Lys-265 is modified (N6-acetyllysine). Phosphoserine is present on Ser-318. Lys-332 is subject to N6-acetyllysine. Residues Lys-532 and Lys-534 each participate in a glycyl lysine isopeptide (Lys-Gly) (interchain with G-Cter in SUMO2) cross-link. Thr-535 carries the phosphothreonine modification. Glycyl lysine isopeptide (Lys-Gly) (interchain with G-Cter in SUMO2) cross-links involve residues Lys-566 and Lys-568. Phosphoserine; by PRKDC is present on residues Ser-577, Ser-579, and Ser-580. Residues Lys-660 and Lys-665 each carry the N6-acetyllysine modification. Glycyl lysine isopeptide (Lys-Gly) (interchain with G-Cter in SUMO2) cross-links involve residues Lys-669 and Lys-688. Thr-715 is modified (phosphothreonine; by PRKDC). The short motif at 720-728 is the EEXXXDL motif element; sequence EEGGDVDDL.

The protein belongs to the ku80 family. As to quaternary structure, heterodimer composed of XRCC5/Ku80 and XRCC6/Ku70; heterodimerization stabilizes XRCC5 protein. Component of the core long-range non-homologous end joining (NHEJ) complex (also named DNA-PK complex) composed of PRKDC, LIG4, XRCC4, XRCC6/Ku70, XRCC5/Ku86 and NHEJ1/XLF. Additional component of the NHEJ complex includes PAXX. Following autophosphorylation, PRKDC dissociates from DNA, leading to formation of the short-range NHEJ complex, composed of LIG4, XRCC4, XRCC6/Ku70, XRCC5/Ku86 and NHEJ1/XLF. The XRCC5-XRCC6 dimer also associates with NAA15, and this complex displays DNA binding activity towards the osteocalcin FGF response element (OCFRE). In addition, XRCC5 binds to the osteoblast-specific transcription factors MSX2 and RUNX2. Interacts with ELF3. Interacts with APLF (via KBM motif). The XRCC5/XRCC6 dimer associates in a DNA-dependent manner with APEX1. Identified in a complex with DEAF1 and XRCC6. Interacts with NR4A3; the DNA-dependent protein kinase complex DNA-PK phosphorylates and activates NR4A3 and prevents NR4A3 ubiquitinylation and degradation. Interacts with RNF138. Interacts with CYREN isoform 1 (CYREN-1) and isoform 4 (CYREN-2) (via KBM motif). Interacts with WRN (via KBM motif). Interacts (via N-terminus) with HSF1 (via N-terminus); this interaction is direct and prevents XRCC5/XRCC6 heterodimeric binding and non-homologous end joining (NHEJ) repair activities induced by ionizing radiation (IR). Interacts with DHX9; this interaction occurs in a RNA-dependent manner. Part of the HDP-RNP complex composed of at least HEXIM1, PRKDC, XRCC5, XRCC6, paraspeckle proteins (SFPQ, NONO, PSPC1, RBM14, and MATR3) and NEAT1 RNA. Interacts with ERCC6. The XRCC5-XRCC6 dimer associates with ALKBH2. Interacts with TPRN; TPRN interacts with a number of DNA damage response proteins, is recruited to sites of DNA damage and may play a role in DNA damage repair. Interacts with ERCC6L2. (Microbial infection) Interacts with human T-cell leukemia virus 1/HTLV-1 protein HBZ. Post-translationally, ADP-ribosylated by PARP3. Phosphorylated on serine residues. Phosphorylation by PRKDC may enhance helicase activity. In terms of processing, sumoylated. Post-translationally, ubiquitinated by RNF8 via 'Lys-48'-linked ubiquitination following DNA damage, leading to its degradation and removal from DNA damage sites. Ubiquitinated by RNF138, leading to remove the Ku complex from DNA breaks.

It localises to the nucleus. The protein localises to the nucleolus. It is found in the chromosome. Its function is as follows. Single-stranded DNA-dependent ATP-dependent helicase that plays a key role in DNA non-homologous end joining (NHEJ) by recruiting DNA-PK to DNA. Required for double-strand break repair and V(D)J recombination. Also has a role in chromosome translocation. The DNA helicase II complex binds preferentially to fork-like ends of double-stranded DNA in a cell cycle-dependent manner. It works in the 3'-5' direction. During NHEJ, the XRCC5-XRRC6 dimer performs the recognition step: it recognizes and binds to the broken ends of the DNA and protects them from further resection. Binding to DNA may be mediated by XRCC6. The XRCC5-XRRC6 dimer acts as a regulatory subunit of the DNA-dependent protein kinase complex DNA-PK by increasing the affinity of the catalytic subunit PRKDC to DNA by 100-fold. The XRCC5-XRRC6 dimer is probably involved in stabilizing broken DNA ends and bringing them together. The assembly of the DNA-PK complex to DNA ends is required for the NHEJ ligation step. The XRCC5-XRRC6 dimer probably also acts as a 5'-deoxyribose-5-phosphate lyase (5'-dRP lyase), by catalyzing the beta-elimination of the 5' deoxyribose-5-phosphate at an abasic site near double-strand breaks. XRCC5 probably acts as the catalytic subunit of 5'-dRP activity, and allows to 'clean' the termini of abasic sites, a class of nucleotide damage commonly associated with strand breaks, before such broken ends can be joined. The XRCC5-XRRC6 dimer together with APEX1 acts as a negative regulator of transcription. In association with NAA15, the XRCC5-XRRC6 dimer binds to the osteocalcin promoter and activates osteocalcin expression. As part of the DNA-PK complex, involved in the early steps of ribosome assembly by promoting the processing of precursor rRNA into mature 18S rRNA in the small-subunit processome. Binding to U3 small nucleolar RNA, recruits PRKDC and XRCC5/Ku86 to the small-subunit processome. Plays a role in the regulation of DNA virus-mediated innate immune response by assembling into the HDP-RNP complex, a complex that serves as a platform for IRF3 phosphorylation and subsequent innate immune response activation through the cGAS-STING pathway. This chain is X-ray repair cross-complementing protein 5 (XRCC5), found in Homo sapiens (Human).